The sequence spans 379 residues: Succinyl-diaminopimelate desuccinylase (379 aa).

A Zn(2+)-binding site is contributed by His-68. Asp-70 is a catalytic residue. Asp-101 is a binding site for Zn(2+). Glu-135 (proton acceptor) is an active-site residue. The Zn(2+) site is built by Glu-136, Glu-164, and His-350.

This sequence belongs to the peptidase M20A family. DapE subfamily. As to quaternary structure, homodimer. The cofactor is Zn(2+). Requires Co(2+) as cofactor.

It catalyses the reaction N-succinyl-(2S,6S)-2,6-diaminopimelate + H2O = (2S,6S)-2,6-diaminopimelate + succinate. It functions in the pathway amino-acid biosynthesis; L-lysine biosynthesis via DAP pathway; LL-2,6-diaminopimelate from (S)-tetrahydrodipicolinate (succinylase route): step 3/3. Its function is as follows. Catalyzes the hydrolysis of N-succinyl-L,L-diaminopimelic acid (SDAP), forming succinate and LL-2,6-diaminopimelate (DAP), an intermediate involved in the bacterial biosynthesis of lysine and meso-diaminopimelic acid, an essential component of bacterial cell walls. This Bordetella parapertussis (strain 12822 / ATCC BAA-587 / NCTC 13253) protein is Succinyl-diaminopimelate desuccinylase.